The following is a 415-amino-acid chain: Zona pellucida-like domain-containing protein 1 (415 aa).

The first 19 residues, 1–19, serve as a signal peptide directing secretion; it reads MERVWLLFLLAIRVSPGSA. Residues 20 to 373 lie on the Extracellular side of the membrane; that stretch reads QFNSYNCDAN…PFQLNAVTSS (354 aa). One can recognise a ZP domain in the interval 43 to 320; sequence YCGVQAITMK…PICGNRKRRD (278 aa). Cystine bridges form between cysteine 44–cysteine 155 and cysteine 79–cysteine 104. Asparagine 164 is a glycosylation site (N-linked (GlcNAc...) asparagine). 2 disulfides stabilise this stretch: cysteine 235–cysteine 296 and cysteine 255–cysteine 313. The helical transmembrane segment at 374–394 threads the bilayer; the sequence is LISGMVILGVLCFSLLLCSLA. Over 395 to 415 the chain is Cytoplasmic; it reads LLHRKGSTSLVLNGVRNPVFE.

Proteolytically cleaved before the transmembrane segment to yield the secreted form found in the extracellular matrix of the cupula.

It localises to the cytoplasmic vesicle membrane. It is found in the secreted. The protein resides in the extracellular space. Its subcellular location is the extracellular matrix. Functionally, glycoprotein which is a component of the gelatinous extracellular matrix in the cupulae of the vestibular organ. In Mus musculus (Mouse), this protein is Zona pellucida-like domain-containing protein 1 (Zpld1).